Consider the following 595-residue polypeptide: MRAAPAAPLLQLLLLLGPRPEAAGVAEPPLPTVVLAILARNAEHSLPHYLGALERLDYPRARLALWCATDHNVDNTTAMLREWLAAVGDNYAAVVWRPEGEPRSYPDEEGPKHWTKERHQFLMELKQEALTFARDWGADYILFADTDNILTNNQTLRLLIEPGLPVVAPMLDSQTYYSNFWCGITPQGYYRRTADYFPTKNRQRRGCFRVPMVHSTFLVSLRAEGTGQLAFYPPHPNYTWPFDDIIVFAYACQAAGVAVHVCNEQRYGYLNVPVKSHQGLEDERVNFIHLILEALVDGPPMWASAHVSRPPKRPSKMGFDEVFVISLARRPDRRERMLTSLWEMEISGRVVDAVDGRMLNSSVMRTLGVDLLPGYQDPYSGRTLTKGEVGCFLSHYSIWEEVVTRGLAQVVVFEDDVRFESNFKGRLEQLMEEVEAEKLPWDLIYLGRKQVNPEEEAVVEGLPHLVAAGYSYWTLAYVLSLAGARKLLASQPLRRMLPVDEFLPIMFDQHPNEQYKAHFWPRDLQAFSARPLLAAPTHYAGDSEWLSDTETSSPWDDDSGRLISWTGSYKTLRGPRLDLAGGSGHSLRPHPRDEL.

Residues 1-24 (MRAAPAAPLLQLLLLLGPRPEAAG) form the signal peptide. 4 N-linked (GlcNAc...) asparagine glycosylation sites follow: Asn-75, Asn-153, Asn-237, and Asn-360. Residues 576-595 (RLDLAGGSGHSLRPHPRDEL) are disordered. The Prevents secretion from ER signature appears at 592–595 (RDEL).

It belongs to the glycosyltransferase 25 family.

The protein localises to the endoplasmic reticulum lumen. Its function is as follows. Probable cell adhesion protein involved in leukocyte transmigration across the blood-brain barrier. Does not express any beta-galactosyltransferase activity in vitro. This is Probable inactive glycosyltransferase 25 family member 3 (CERCAM) from Bos taurus (Bovine).